A 474-amino-acid polypeptide reads, in one-letter code: MAGKTLYDKLWDSHLVKQRDDGSALIYIDRHIIHEVTSPQAFEGLRLAKRKPWRIDSIIATPDHNVPTTSERKGGIDAIEDQVSRLQVQTLDDNCDEYGITEFKMNDPRQGIVHVIGPEQGATLPGMSVVCGDSHTSTHGAFGALAHGIGTSEVEHVLATQCLVAKKMKNMLVSVEGQLPFGVTAKDIVLAVIGKIGTAGGNGYAIEFAGSAIRDLSIEGRMTICNMSIEAGARVGMVATDEKTVEYVKGRPFAPKGAEWDLAVEAWKDLVSDADAVFDTVVRLDAAQIKPQVSWGTSPEMVLAVDQNVPDPAQEPDLVKRGSIERALKYMGLKANQPITDIQLDRVFIGSCTNSRIEDLRAAADVAKGRKVAATIKQAIVVPGSGLIKEQAEKEGLDKVFIEAGFEWREPGCSMCLAMNPDRLGSGEHCASTSNRNFEGRQGAGGRTHLVSPAMAAAAAVNGRFIDVRDLIQL.

Residues Cys-352, Cys-413, and Cys-416 each coordinate [4Fe-4S] cluster.

The protein belongs to the aconitase/IPM isomerase family. LeuC type 1 subfamily. In terms of assembly, heterodimer of LeuC and LeuD. Requires [4Fe-4S] cluster as cofactor.

The catalysed reaction is (2R,3S)-3-isopropylmalate = (2S)-2-isopropylmalate. The protein operates within amino-acid biosynthesis; L-leucine biosynthesis; L-leucine from 3-methyl-2-oxobutanoate: step 2/4. Catalyzes the isomerization between 2-isopropylmalate and 3-isopropylmalate, via the formation of 2-isopropylmaleate. This chain is 3-isopropylmalate dehydratase large subunit, found in Pseudomonas savastanoi pv. phaseolicola (strain 1448A / Race 6) (Pseudomonas syringae pv. phaseolicola (strain 1448A / Race 6)).